Consider the following 210-residue polypeptide: MTKGILGRKIGMTQVFAENGELIPVTVIAANPNVVLQKKTTETDGYNAIQLGFEDKREKLTNKPEQGHTAKASTTPKRFIREIRDADVDGLEVGQEVKVEVFAAGEIVDVTGISKGKGFQGVIKRHGQSRGPMSHGSRYHRRPGSMGPVAPNRVFKGKKLAGRMGGDQVTIQNLEIVQVDTERNLLLVKGNVPGAKKSLVVVQGAVKVSK.

The disordered stretch occupies residues 125–151 (RHGQSRGPMSHGSRYHRRPGSMGPVAP).

The protein belongs to the universal ribosomal protein uL3 family. In terms of assembly, part of the 50S ribosomal subunit. Forms a cluster with proteins L14 and L19.

In terms of biological role, one of the primary rRNA binding proteins, it binds directly near the 3'-end of the 23S rRNA, where it nucleates assembly of the 50S subunit. The sequence is that of Large ribosomal subunit protein uL3 from Bacillus mycoides (strain KBAB4) (Bacillus weihenstephanensis).